The primary structure comprises 449 residues: tRNA modification GTPase MnmE (449 aa).

(6S)-5-formyl-5,6,7,8-tetrahydrofolate-binding residues include R24, E81, and K121. One can recognise a TrmE-type G domain in the interval 218–375 (GLVVAITGPP…LIAALGKFAA (158 aa)). GTP-binding positions include 228-233 (NVGKST), 247-253 (SPHAGTT), and 272-275 (DTAG). Mg(2+)-binding residues include S232 and T253. K449 contacts (6S)-5-formyl-5,6,7,8-tetrahydrofolate.

The protein belongs to the TRAFAC class TrmE-Era-EngA-EngB-Septin-like GTPase superfamily. TrmE GTPase family. As to quaternary structure, homodimer. Heterotetramer of two MnmE and two MnmG subunits. Requires K(+) as cofactor.

It is found in the cytoplasm. Functionally, exhibits a very high intrinsic GTPase hydrolysis rate. Involved in the addition of a carboxymethylaminomethyl (cmnm) group at the wobble position (U34) of certain tRNAs, forming tRNA-cmnm(5)s(2)U34. This chain is tRNA modification GTPase MnmE, found in Rhodopseudomonas palustris (strain BisB18).